We begin with the raw amino-acid sequence, 248 residues long: MSFVVIIPARFASTRLPGKPLQDINGKPMIVHVLERARESGADRIIVATDHPDVASAVEAAGGEVCMTRADHQSGTERLAEVVEKCAFSDDTIIVNIQGDEPMIPPAIVRQVAENLASSSSGMATLAVPIHDAEEAFNPNAVKVVMDAQGYALYFSRATIPWDRDRFAHSRETIGDSLLRHIGIYGYRAGFIRRYVSWAPSPLEQIEMLEQLRVLWYGEKIHVAVAAEVPGTGVDTPEDLERVRAELR.

The protein belongs to the KdsB family.

The protein localises to the cytoplasm. It carries out the reaction 3-deoxy-alpha-D-manno-oct-2-ulosonate + CTP = CMP-3-deoxy-beta-D-manno-octulosonate + diphosphate. Its pathway is nucleotide-sugar biosynthesis; CMP-3-deoxy-D-manno-octulosonate biosynthesis; CMP-3-deoxy-D-manno-octulosonate from 3-deoxy-D-manno-octulosonate and CTP: step 1/1. The protein operates within bacterial outer membrane biogenesis; lipopolysaccharide biosynthesis. Functionally, activates KDO (a required 8-carbon sugar) for incorporation into bacterial lipopolysaccharide in Gram-negative bacteria. The chain is 3-deoxy-manno-octulosonate cytidylyltransferase from Klebsiella pneumoniae (strain 342).